Reading from the N-terminus, the 449-residue chain is Naphthalene 1,2-dioxygenase system, large oxygenase component (449 aa).

The 99-residue stretch at 39 to 137 (WLFLTHDSLI…LNKKCLGLKE (99 aa)) folds into the Rieske domain. 4 residues coordinate [2Fe-2S] cluster: cysteine 81, histidine 83, cysteine 101, and histidine 104. Fe cation contacts are provided by histidine 208, histidine 213, and aspartate 362.

The protein belongs to the bacterial ring-hydroxylating dioxygenase alpha subunit family. As to quaternary structure, the naphthalene dioxygenase (NDO) multicomponent enzyme system is composed of an electron transfer component and a dioxygenase component (iron sulfur protein (ISP)). The electron transfer component is composed of a ferredoxin reductase (NdoR) and a ferredoxin (NdoA), and the dioxygenase component is formed of a heterohexamer (trimer of heterodimers) of three large alpha subunits (NdoB) and three small beta subunits (NdoC). [2Fe-2S] cluster is required as a cofactor. It depends on Fe(2+) as a cofactor.

It carries out the reaction naphthalene + NADH + O2 + H(+) = (1R,2S)-1,2-dihydronaphthalene-1,2-diol + NAD(+). The protein operates within aromatic compound metabolism; naphthalene degradation. In terms of biological role, component of the naphthalene dioxygenase (NDO) multicomponent enzyme system which catalyzes the incorporation of both atoms of molecular oxygen into naphthalene to form cis-(1R,2S)-dihydroxy-1,2-dihydronaphthalene. The alpha subunit has a catalytic role in the holoenzyme. The sequence is that of Naphthalene 1,2-dioxygenase system, large oxygenase component from Pseudomonas fluorescens.